A 627-amino-acid chain; its full sequence is Serine/threonine-protein kinase Nek5 (627 aa).

Residues 4 to 255 enclose the Protein kinase domain; the sequence is FHLIKIIGEG…VTSLLKRPFL (252 aa). ATP is bound by residues 10–18 and lysine 33; that span reads IGEGTFGKV. The active-site Proton acceptor is aspartate 124. Residues 563-580 are compositionally biased toward acidic residues; sequence QLEPGSDEDDIKFEESED. Disordered regions lie at residues 563–582 and 591–627; these read QLEP…EDEL and EKLA…KKLQ. Over residues 609–619 the composition is skewed to basic and acidic residues; that stretch reads NAEEPGEKEKT.

It belongs to the protein kinase superfamily. NEK Ser/Thr protein kinase family. NIMA subfamily. Mg(2+) is required as a cofactor.

The protein localises to the cell projection. It localises to the cilium. It is found in the flagellum. The enzyme catalyses L-seryl-[protein] + ATP = O-phospho-L-seryl-[protein] + ADP + H(+). The catalysed reaction is L-threonyl-[protein] + ATP = O-phospho-L-threonyl-[protein] + ADP + H(+). The sequence is that of Serine/threonine-protein kinase Nek5 (Nek5) from Mus musculus (Mouse).